The primary structure comprises 188 residues: Peptidyl-tRNA hydrolase (188 aa).

Tyr-15 contributes to the tRNA binding site. His-20 functions as the Proton acceptor in the catalytic mechanism. Tyr-64, Asn-66, and Asn-112 together coordinate tRNA.

It belongs to the PTH family. Monomer.

Its subcellular location is the cytoplasm. It carries out the reaction an N-acyl-L-alpha-aminoacyl-tRNA + H2O = an N-acyl-L-amino acid + a tRNA + H(+). Hydrolyzes ribosome-free peptidyl-tRNAs (with 1 or more amino acids incorporated), which drop off the ribosome during protein synthesis, or as a result of ribosome stalling. Functionally, catalyzes the release of premature peptidyl moieties from peptidyl-tRNA molecules trapped in stalled 50S ribosomal subunits, and thus maintains levels of free tRNAs and 50S ribosomes. This is Peptidyl-tRNA hydrolase from Cytophaga hutchinsonii (strain ATCC 33406 / DSM 1761 / CIP 103989 / NBRC 15051 / NCIMB 9469 / D465).